A 437-amino-acid polypeptide reads, in one-letter code: 3-phosphoshikimate 1-carboxyvinyltransferase (437 aa).

Residues Lys-28, Ser-29, and Arg-33 each contribute to the 3-phosphoshikimate site. Residue Lys-28 coordinates phosphoenolpyruvate. 2 residues coordinate phosphoenolpyruvate: Gly-97 and Arg-125. Ser-168, Ser-169, Gln-170, Glu-316, and His-343 together coordinate 3-phosphoshikimate. A phosphoenolpyruvate-binding site is contributed by Gln-170. Glu-316 functions as the Proton acceptor in the catalytic mechanism. Phosphoenolpyruvate contacts are provided by Arg-347, Arg-388, and Lys-413.

Belongs to the EPSP synthase family. In terms of assembly, monomer.

It is found in the cytoplasm. It carries out the reaction 3-phosphoshikimate + phosphoenolpyruvate = 5-O-(1-carboxyvinyl)-3-phosphoshikimate + phosphate. Its pathway is metabolic intermediate biosynthesis; chorismate biosynthesis; chorismate from D-erythrose 4-phosphate and phosphoenolpyruvate: step 6/7. Catalyzes the transfer of the enolpyruvyl moiety of phosphoenolpyruvate (PEP) to the 5-hydroxyl of shikimate-3-phosphate (S3P) to produce enolpyruvyl shikimate-3-phosphate and inorganic phosphate. The polypeptide is 3-phosphoshikimate 1-carboxyvinyltransferase (Rhodococcus erythropolis (strain PR4 / NBRC 100887)).